Reading from the N-terminus, the 325-residue chain is ATP synthase subunit gamma, mitochondrial (325 aa).

The transit peptide at 1 to 42 (MAMAVFRREGRRLLPSIAARPIAAIRSPLSSDQEEGLLGVRS) directs the protein to the mitochondrion.

Belongs to the ATPase gamma chain family. F-type ATPases have 2 components, CF(1) - the catalytic core - and CF(0) - the membrane proton channel. CF(1) has five subunits: alpha(3), beta(3), gamma(1), delta(1), epsilon(1). CF(0) has three main subunits: a, b and c.

The protein localises to the mitochondrion. It localises to the mitochondrion inner membrane. Mitochondrial membrane ATP synthase (F(1)F(0) ATP synthase or Complex V) produces ATP from ADP in the presence of a proton gradient across the membrane which is generated by electron transport complexes of the respiratory chain. F-type ATPases consist of two structural domains, F(1) - containing the extramembraneous catalytic core, and F(0) - containing the membrane proton channel, linked together by a central stalk and a peripheral stalk. During catalysis, ATP synthesis in the catalytic domain of F(1) is coupled via a rotary mechanism of the central stalk subunits to proton translocation. Part of the complex F(1) domain and the central stalk which is part of the complex rotary element. The gamma subunit protrudes into the catalytic domain formed of alpha(3)beta(3). Rotation of the central stalk against the surrounding alpha(3)beta(3) subunits leads to hydrolysis of ATP in three separate catalytic sites on the beta subunits. This is ATP synthase subunit gamma, mitochondrial (ATPC) from Arabidopsis thaliana (Mouse-ear cress).